The following is a 903-amino-acid chain: Protein translocase subunit SecA (903 aa).

ATP is bound by residues Gln-87, 105 to 109 (GEGKT), and Asp-513. Basic and acidic residues predominate over residues 840–853 (MEAQRRAQAEEAAR). The interval 840–903 (MEAQRRAQAE…KYKQCHGQIN (64 aa)) is disordered. Zn(2+) is bound by residues Cys-887, Cys-889, Cys-898, and His-899.

Belongs to the SecA family. As to quaternary structure, monomer and homodimer. Part of the essential Sec protein translocation apparatus which comprises SecA, SecYEG and auxiliary proteins SecDF-YajC and YidC. Requires Zn(2+) as cofactor.

It localises to the cell inner membrane. The protein resides in the cytoplasm. It carries out the reaction ATP + H2O + cellular proteinSide 1 = ADP + phosphate + cellular proteinSide 2.. Its function is as follows. Part of the Sec protein translocase complex. Interacts with the SecYEG preprotein conducting channel. Has a central role in coupling the hydrolysis of ATP to the transfer of proteins into and across the cell membrane, serving both as a receptor for the preprotein-SecB complex and as an ATP-driven molecular motor driving the stepwise translocation of polypeptide chains across the membrane. The polypeptide is Protein translocase subunit SecA (Vibrio cholerae serotype O1 (strain M66-2)).